A 246-amino-acid chain; its full sequence is Carboxy-S-adenosyl-L-methionine synthase (246 aa).

Residues tyrosine 39, 64-66, 89-90, 121-122, asparagine 136, and arginine 203 contribute to the S-adenosyl-L-methionine site; these read GCS, DN, and DI.

Belongs to the class I-like SAM-binding methyltransferase superfamily. Cx-SAM synthase family. In terms of assembly, homodimer.

It carries out the reaction prephenate + S-adenosyl-L-methionine = carboxy-S-adenosyl-L-methionine + 3-phenylpyruvate + H2O. In terms of biological role, catalyzes the conversion of S-adenosyl-L-methionine (SAM) to carboxy-S-adenosyl-L-methionine (Cx-SAM). The chain is Carboxy-S-adenosyl-L-methionine synthase from Pseudomonas aeruginosa (strain UCBPP-PA14).